Consider the following 590-residue polypeptide: Myo-inositol transporter 3C (590 aa).

Topologically, residues 1-63 (MSRTPSSLDK…GEDKVTPYLC (63 aa)) are cytoplasmic. Residues 64–86 (FLISASAIAGFLFGYDTGVVGVA) form a helical membrane-spanning segment. Residues 87–105 (LPLVGTDLGGSVLSSSQQE) are Extracellular-facing. Residues 106-126 (IITAGTTIGAIFGSAILGGWG) form a helical membrane-spanning segment. At 127 to 132 (DRLGRK) the chain is on the cytoplasmic side. Residues 133-153 (VAILIADVFFTVGAVLIAASY) form a helical membrane-spanning segment. At 154-162 (SVPQMIVGR) the chain is on the extracellular side. A helical membrane pass occupies residues 163 to 183 (IVLGVGVGGAAAIAPLFITET). Topologically, residues 184 to 192 (APTAVRGRC) are cytoplasmic. The helical transmembrane segment at 193 to 213 (IGVNAFFIPFGQVISEAIGAG) threads the bilayer. Over 214–222 (VQDMKNGWR) the chain is Extracellular. The helical transmembrane segment at 223–243 (LLFALGAVPSLFQLILFHYLP) threads the bilayer. Residues 244-325 (ESPRILILRG…TVSLIQMAGQ (82 aa)) are Cytoplasmic-facing. Residues 326-346 (LSGFNTLLYYAGTLFSLLGLT) traverse the membrane as a helical segment. Residues 347-349 (NPA) lie on the Extracellular side of the membrane. Residues 350–370 (LGGLIPAGTNAFFVLVGMTLV) form a helical membrane-spanning segment. Over 371–376 (DKVGRR) the chain is Cytoplasmic. Residues 377–397 (GLLMFGVPIMLAGLVWNIVAF) form a helical membrane-spanning segment. Over 398-417 (HYLCIPTGGLLDTSYKYDTK) the chain is Extracellular. The helical transmembrane segment at 418–438 (LVGIVIGGIVFFTTGFGLTYS) threads the bilayer. Residues 439–454 (HLAWYQSEFLALEVRS) lie on the Cytoplasmic side of the membrane. The chain crosses the membrane as a helical span at residues 455–475 (VGSGIATTANWVANLVVSVSY). Residues 476 to 485 (LTELETLTPS) lie on the Extracellular side of the membrane. Residues 486–506 (GTYGLYLGFSVVFFIFAVFCY) form a helical membrane-spanning segment. At 507-590 (PETKQLSIDE…NGAKRFPISR (84 aa)) the chain is on the cytoplasmic side.

The protein belongs to the major facilitator superfamily. Sugar transporter (TC 2.A.1.1) family.

The protein resides in the cell membrane. It catalyses the reaction myo-inositol(out) + H(+)(out) = myo-inositol(in) + H(+)(in). Functionally, major transporter for myo-inositol. Plays a role in the traversal of the host blood-brain barrier. In Cryptococcus neoformans var. grubii serotype A (strain H99 / ATCC 208821 / CBS 10515 / FGSC 9487) (Filobasidiella neoformans var. grubii), this protein is Myo-inositol transporter 3C.